The following is a 186-amino-acid chain: Ribosome-recycling factor (186 aa).

It belongs to the RRF family.

The protein localises to the cytoplasm. In terms of biological role, responsible for the release of ribosomes from messenger RNA at the termination of protein biosynthesis. May increase the efficiency of translation by recycling ribosomes from one round of translation to another. The sequence is that of Ribosome-recycling factor from Rhodopseudomonas palustris (strain ATCC BAA-98 / CGA009).